The chain runs to 500 residues: Probable zinc metalloprotease MGYG_02393 (500 aa).

Positions 1 to 24 (MHLSMGGLLPGLALLASANALALA) are cleaved as a signal peptide. 3 N-linked (GlcNAc...) asparagine glycosylation sites follow: asparagine 61, asparagine 103, and asparagine 124. 3 residues coordinate Zn(2+): histidine 174, aspartate 194, and glutamate 230. Asparagine 245 carries an N-linked (GlcNAc...) asparagine glycan. Aspartate 257 is a Zn(2+) binding site. One can recognise a Fibronectin type-III domain in the interval 414–500 (MPRNVRVNTS…ERGVAVLPFP (87 aa)). Residues asparagine 421 and asparagine 427 are each glycosylated (N-linked (GlcNAc...) asparagine).

Belongs to the peptidase M28 family. M28B subfamily. Zn(2+) serves as cofactor.

The protein localises to the secreted. The polypeptide is Probable zinc metalloprotease MGYG_02393 (Arthroderma gypseum (strain ATCC MYA-4604 / CBS 118893) (Microsporum gypseum)).